The chain runs to 406 residues: tRNA-specific 2-thiouridylase MnmA (406 aa).

Residues 6-13 (AMSGGVDS) and Leu-32 each bind ATP. Cys-101 functions as the Nucleophile in the catalytic mechanism. A disulfide bridge links Cys-101 with Cys-193. Gly-125 contacts ATP. Residues 143–145 (KDQ) form an interaction with tRNA region. Residue Cys-193 is the Cysteine persulfide intermediate of the active site. The interval 378–406 (GAPIEEQPAPGTVGAVDADAIEQGEDAQR) is disordered. The span at 396–406 (DAIEQGEDAQR) shows a compositional bias: acidic residues.

It belongs to the MnmA/TRMU family.

The protein localises to the cytoplasm. It carries out the reaction S-sulfanyl-L-cysteinyl-[protein] + uridine(34) in tRNA + AH2 + ATP = 2-thiouridine(34) in tRNA + L-cysteinyl-[protein] + A + AMP + diphosphate + H(+). Its function is as follows. Catalyzes the 2-thiolation of uridine at the wobble position (U34) of tRNA, leading to the formation of s(2)U34. The sequence is that of tRNA-specific 2-thiouridylase MnmA from Corynebacterium urealyticum (strain ATCC 43042 / DSM 7109).